We begin with the raw amino-acid sequence, 645 residues long: Chaperone protein DnaK (645 aa).

Thr-201 bears the Phosphothreonine; by autocatalysis mark. Over residues Asn-606–Ser-629 the composition is skewed to low complexity. The tract at residues Asn-606–Lys-645 is disordered. Residues Lys-630 to Lys-645 are compositionally biased toward basic and acidic residues.

The protein belongs to the heat shock protein 70 family.

Acts as a chaperone. The chain is Chaperone protein DnaK from Ehrlichia ruminantium (strain Welgevonden).